Consider the following 231-residue polypeptide: 5'-methylthioadenosine/S-adenosylhomocysteine nucleosidase (231 aa).

Catalysis depends on Glu-12, which acts as the Proton acceptor. Substrate is bound by residues Gly-78, Val-153, and 174–175; that span reads ME. The active-site Proton donor is Asp-198.

Belongs to the PNP/UDP phosphorylase family. MtnN subfamily.

It carries out the reaction S-adenosyl-L-homocysteine + H2O = S-(5-deoxy-D-ribos-5-yl)-L-homocysteine + adenine. It catalyses the reaction S-methyl-5'-thioadenosine + H2O = 5-(methylsulfanyl)-D-ribose + adenine. The enzyme catalyses 5'-deoxyadenosine + H2O = 5-deoxy-D-ribose + adenine. Its pathway is amino-acid biosynthesis; L-methionine biosynthesis via salvage pathway; S-methyl-5-thio-alpha-D-ribose 1-phosphate from S-methyl-5'-thioadenosine (hydrolase route): step 1/2. Functionally, catalyzes the irreversible cleavage of the glycosidic bond in both 5'-methylthioadenosine (MTA) and S-adenosylhomocysteine (SAH/AdoHcy) to adenine and the corresponding thioribose, 5'-methylthioribose and S-ribosylhomocysteine, respectively. Also cleaves 5'-deoxyadenosine, a toxic by-product of radical S-adenosylmethionine (SAM) enzymes, into 5-deoxyribose and adenine. This chain is 5'-methylthioadenosine/S-adenosylhomocysteine nucleosidase, found in Vibrio campbellii (strain ATCC BAA-1116).